The chain runs to 996 residues: GPI ethanolamine phosphate transferase 1 (996 aa).

Residues 1-8 are Cytoplasmic-facing; that stretch reads MAAFPRFR. The helical transmembrane segment at 9–29 threads the bilayer; it reads FLAIAVIFHFAYIFSIFDIYF. Residues 30-463 are Lumenal-facing; the sequence is VSPIETGMRL…LQTYDWLFLR (434 aa). Asn47, Asn147, and Asn210 each carry an N-linked (GlcNAc...) asparagine glycan. Residues 464 to 484 traverse the membrane as a helical segment; the sequence is ALITIGYLGWIAYALTTVVDL. Over 485–495 the chain is Cytoplasmic; it reads HVLHGRVRPSR. The chain crosses the membrane as a helical span at residues 496–516; the sequence is TLGGGLFFTSVLVALYASLVI. At 517 to 518 the chain is on the lumenal side; it reads SK. A helical transmembrane segment spans residues 519–539; sequence SPLTYYVYAFFPVFFWEEVYA. Residues 540 to 560 lie on the Cytoplasmic side of the membrane; sequence HRESLAAGRKELLGHINSGGS. Residues 561 to 581 traverse the membrane as a helical segment; sequence VASFVLNSALYVGVIESLALG. The Lumenal portion of the chain corresponds to 582-586; it reads YIHRE. The chain crosses the membrane as a helical span at residues 587–607; sequence ILSVLFVLGSFWPFTHGLSFL. At 608-612 the chain is on the cytoplasmic side; it reads KKHGA. The chain crosses the membrane as a helical span at residues 613–633; it reads LSATWFLACIAMSTFTLLPAM. Topologically, residues 634-637 are lumenal; that stretch reads KAEN. The helical transmembrane segment at 638-658 threads the bilayer; sequence VNLITIGGVLMVVIGLLYLIF. Residues 659–681 are Cytoplasmic-facing; that stretch reads EDFVLADFSWNAKPTSRNHLSRS. A helical membrane pass occupies residues 682-702; sequence LVGIQVGLTVLSIIITRSSAL. At 703 to 715 the chain is on the lumenal side; sequence SLQAKQGLPRGNQ. A helical membrane pass occupies residues 716–734; the sequence is IMGWVTLVASLLMPLAYRL. The Cytoplasmic portion of the chain corresponds to 735 to 754; the sequence is RPNNHYMHRILVIFLTCAPT. The chain crosses the membrane as a helical span at residues 755–775; it reads FVILTISYEGLFYLVFSALLV. Residues 776–822 are Lumenal-facing; it reads SWVRLEHAVQKFTSSKAPQTAATKKPTTTTESHLPAPFRPLTLHDAR. Residues 823-843 form a helical membrane-spanning segment; it reads VALFFFILLQSAFFSTGNVAS. At 844–865 the chain is on the cytoplasmic side; that stretch reads VSSFSLDSVYRLIPIFDPFSQG. Residues 866-886 form a helical membrane-spanning segment; that stretch reads AMLILKLMIPFALISANLGIL. The Lumenal segment spans residues 887–895; sequence NKRLGVAPS. A helical transmembrane segment spans residues 896 to 916; sequence ALFMVVMGISDILTLYFFWVV. The Cytoplasmic segment spans residues 917 to 932; sequence KDEGSWLEIGSTISHF. A helical transmembrane segment spans residues 933–953; that stretch reads VIASLLCVFVSALEPVSAAFI. The Lumenal segment spans residues 954–996; that stretch reads AGVEVGEESELKEEGKVAEKVVEKVNEAVEGLVSGGDGGGDES.

This sequence belongs to the PIGG/PIGN/PIGO family. PIGN subfamily.

The protein resides in the endoplasmic reticulum membrane. Its pathway is glycolipid biosynthesis; glycosylphosphatidylinositol-anchor biosynthesis. Functionally, ethanolamine phosphate transferase involved in glycosylphosphatidylinositol-anchor biosynthesis. Transfers ethanolamine phosphate to the first alpha-1,4-linked mannose of the glycosylphosphatidylinositol precursor of GPI-anchor. The sequence is that of GPI ethanolamine phosphate transferase 1 (mcd-4) from Neurospora crassa (strain ATCC 24698 / 74-OR23-1A / CBS 708.71 / DSM 1257 / FGSC 987).